The primary structure comprises 550 residues: MKKFITSALPYVNNQPHLGNIIGSVLSGDVYSRYCKKKGEVSVYICGTDEYGTAIEMEAISQGVTPLEICEKNRKLHKQVYDWFNIDFDYFGFTSSATHTGLVQDLFMKMYDNGHFSEVEIEQFYCEHCGLFLADRFIVGECKFCGDGRARGDQCDSCGHTYNSLELLSPRCSICSSSPVVRATTHLFFDLEAFRPSLEELYRTNGHLWSQNAQNIFRQWISMEFYPRCMTRDLKFNWGVPVPLEKFKEKVFYVWFDAPIGYLTFLKELVGEDFGEWCKDAELVQFMGKDNVAFHTVIFPAMLYATGEKYPVVRRLSATEYLQFENEKFSKSRRHGIFGLDLVGGGLGKSCMWRYYLLKIRPESTKDSNFTFSDFRQSVTADLINNLGNFVNRVLKYIQSKCNSRVSLLELDSGDKKCIEDVNELYCKYKAKMEEIKLREALQVVMEICRRGNEYIQEGVRSRDRKGHFFCLGFSIIGLVGTLLHPFIPVTSLEILRMCNLEETMFPESMRIVDGHTMGSDIRPLFEDFTTEQIEEMKRYDRPQSTGCSK.

The 'HIGH' region motif lies at 10–20; it reads PYVNNQPHLGN. The short motif at 328–332 is the 'KMSKS' region element; it reads KFSKS. Residue K331 coordinates ATP.

This sequence belongs to the class-I aminoacyl-tRNA synthetase family.

It is found in the cytoplasm. The catalysed reaction is tRNA(Met) + L-methionine + ATP = L-methionyl-tRNA(Met) + AMP + diphosphate. This is Probable methionine--tRNA ligase, cytoplasmic from Encephalitozoon cuniculi (strain GB-M1) (Microsporidian parasite).